Here is a 242-residue protein sequence, read N- to C-terminus: MLLFPRRTNIAFFKTTGIFANFPLLGRTITTSPSFLTHKLSKEVTRASTSPPRPKRIVVAITGATGVALGIRLLQVLKELSVETHLVISKWGAATMKYETDWEPHDVAALATKTYSVRDVSACISSGSFQHDGMIVVPCSMKSLAAIRIGFTEDLITRAADVSIKENRKLLLVTRETPLSSIHLENMLSLCRAGVIIFPPVPAFYTRPKSLHDLLEQSVGRILDCFGIHADTFPRWEGIKSK.

A mitochondrion-targeting transit peptide spans 1–58; it reads MLLFPRRTNIAFFKTTGIFANFPLLGRTITTSPSFLTHKLSKEVTRASTSPPRPKRIV. Residues 63–65, Ser89, 140–143, and Arg175 each bind FMN; these read GAT and SMKS. Positions 205 and 221 each coordinate dimethylallyl phosphate.

Belongs to the UbiX/PAD1 family. Oligomer.

It localises to the mitochondrion. The enzyme catalyses dimethylallyl phosphate + FMNH2 = prenylated FMNH2 + phosphate. In terms of biological role, flavin prenyltransferase that catalyzes the synthesis of the prenylated FMN cofactor (prenyl-FMN) for the ferulic acid decarboxylase FDC1/ubiD. The prenyltransferase is metal-independent and links a dimethylallyl moiety from dimethylallyl monophosphate (DMAP) to the flavin N5 and C6 atoms of FMN. Involved in the decarboxylation of phenylacrylic acids like ferulic acid, p-coumaric acid or cinnamic acid, producing the corresponding vinyl derivatives which play the role of aroma metabolites. Also involved in the degradation of the food preservative sorbic acid (2,4-hexadienoic acid) to a volatile hydrocarbon, 1,3-pentadiene. Not essential for ubiquinone synthesis. Can rescue Q biosynthesis in E.coli strains lacking UbiX. Has mRNA binding activity. This is Flavin prenyltransferase PAD1, mitochondrial from Saccharomyces cerevisiae (strain ATCC 204508 / S288c) (Baker's yeast).